A 3608-amino-acid chain; its full sequence is Serine-rich adhesin for platelets (3608 aa).

Residues 1–91 (MSRKERNFKR…FAMLNDHHAY (91 aa)) form the signal peptide. Residues 92–302 (AASETPMTSE…DSTSTSTSTA (211 aa)) form a serine-rich repeat region 1, SRR1 region. Disordered regions lie at residues 105-280 (NSET…SESQ), 495-3575 (DPTS…SNST), and 3588-3608 (LGLFGKSRKNKKDKKNKGSEQ). The segment covering 114-201 (STTVTKSETS…DNSTSNNSTT (88 aa)) has biased composition (low complexity). Polar residues predominate over residues 209-220 (QANTTSTDSQKG). Composition is skewed to low complexity over residues 221-234 (STSTNDNSITSTST), 244-280 (TESNSITASNSTSDSNSGSTVSTNSTTSQLTSTSESQ), and 497-3545 (TSTA…ESQS). Residues 303-755 (PLKLRTFSRL…STSLSGSESA (453 aa)) are non-repeat region (NRR). The interval 756 to 3567 (SLSDSASAST…HDAKDELPDT (2812 aa)) is serine-rich repeat region 2, SRR2. The LPXTG sorting signal signature appears at 3564–3568 (LPDTG). A Pentaglycyl murein peptidoglycan amidated threonine modification is found at threonine 3567. Residues 3568–3608 (GDSDSNSTGLVSAVAAMLAGLGLFGKSRKNKKDKKNKGSEQ) constitute a propeptide, removed by sortase. Residues 3593 to 3602 (KSRKNKKDKK) show a composition bias toward basic residues.

Belongs to the serine-rich repeat protein (SRRP) family. Proteolytically cleaved by a metalloprotease. Post-translationally, glycosylated. It is probable that most of the Ser residues in SSR1 and SSR2 are O-GlcNAcylated. Sequential glycosylation by sugar transferases are able to generate complex sugar polymorphisms.

It is found in the secreted. The protein resides in the cell wall. Mediates binding to human platelets, possibly through a receptor-ligand interaction. In Staphylococcus haemolyticus (strain JCSC1435), this protein is Serine-rich adhesin for platelets (sraP).